The chain runs to 479 residues: T-box transcription factor TBX1 (479 aa).

Low complexity-rich tracts occupy residues 15–31 (ASSLSGLGSPSPGADPF) and 59–86 (YPFAPAPGAAGSSAAESEGPGASRAAAV). The interval 15–86 (ASSLSGLGSP…GPGASRAAAV (72 aa)) is disordered. A DNA-binding region (T-box) is located at residues 108-286 (LWDEFNQLGT…SNPFAKGFRD (179 aa)). The interval 311–398 (RNPVASPTQP…APGASEPLHH (88 aa)) is disordered. The span at 313–322 (PVASPTQPNG) shows a compositional bias: polar residues. Over residues 323-338 (SDKDAAEARREFDRDS) the composition is skewed to basic and acidic residues. The Nuclear localization signal signature appears at 415–426 (KSRPAPYPLPGL).

As to quaternary structure, binds DNA as a dimer. Interacts with DSCR6. Interacts with NKX2-5. In terms of tissue distribution, expressed in skeletal muscle, lung and testis. Highly expressed in hair follicle stem cell, but not in terminally differentiating cells.

It is found in the nucleus. Transcription factor that plays a key role in cardiovascular development by promoting pharyngeal arch segmentation during embryonic development. Also involved in craniofacial muscle development. Together with NKX2-5, acts as a regulator of asymmetric cardiac morphogenesis by promoting expression of PITX2. Acts upstream of TBX1 for the formation of the thymus and parathyroid glands from the third pharyngeal pouch. Required for hair follicle stem cell self-renewal. Binds to the palindromic T site 5'-TTCACACCTAGGTGTGAA-3' DNA sequence. In Mus musculus (Mouse), this protein is T-box transcription factor TBX1.